Here is a 462-residue protein sequence, read N- to C-terminus: Glutamate--tRNA ligase 1 (462 aa).

The 'HIGH' region motif lies at 8-18 (PSPTGYLHIGG). The 'KMSKS' region motif lies at 237–241 (KLSKR). Position 240 (K240) interacts with ATP.

Belongs to the class-I aminoacyl-tRNA synthetase family. Glutamate--tRNA ligase type 1 subfamily. As to quaternary structure, monomer.

It localises to the cytoplasm. It carries out the reaction tRNA(Glu) + L-glutamate + ATP = L-glutamyl-tRNA(Glu) + AMP + diphosphate. Catalyzes the attachment of glutamate to tRNA(Glu) in a two-step reaction: glutamate is first activated by ATP to form Glu-AMP and then transferred to the acceptor end of tRNA(Glu). This chain is Glutamate--tRNA ligase 1, found in Sulfurimonas denitrificans (strain ATCC 33889 / DSM 1251) (Thiomicrospira denitrificans (strain ATCC 33889 / DSM 1251)).